The sequence spans 28 residues: Potassium channel toxin alpha-KTx 9.5 (28 aa).

3 cysteine pairs are disulfide-bonded: C3–C19, C6–C24, and C10–C26. Residue V28 is modified to Valine amide.

Expressed by the venom gland.

Its subcellular location is the secreted. Blocks voltage-gated potassium channels Kv1.1/KCNA1 (IC(50)=145 nM), Kv1.2/KCNA2 (IC(50)=2.5 nM), and Kv1.3/KCNA3 (IC(50)=15). Also inhibits calcium-activated potassium channels (KCa/KCNN). The protein is Potassium channel toxin alpha-KTx 9.5 of Buthus occitanus tunetanus (Common European scorpion).